The chain runs to 518 residues: GMP synthase [glutamine-hydrolyzing] (518 aa).

In terms of domain architecture, Glutamine amidotransferase type-1 spans 6 to 200 (RLLIIDFGSQ…FVRLAGFKGD (195 aa)). C84 (nucleophile) is an active-site residue. Catalysis depends on residues H175 and E177. Positions 201-393 (WTMGAYREEA…LGLPESFIGR (193 aa)) constitute a GMPS ATP-PPase domain. 228–234 (SGGVDSS) is a binding site for ATP.

Homodimer.

The enzyme catalyses XMP + L-glutamine + ATP + H2O = GMP + L-glutamate + AMP + diphosphate + 2 H(+). It participates in purine metabolism; GMP biosynthesis; GMP from XMP (L-Gln route): step 1/1. Catalyzes the synthesis of GMP from XMP. The chain is GMP synthase [glutamine-hydrolyzing] from Cereibacter sphaeroides (strain ATCC 17023 / DSM 158 / JCM 6121 / CCUG 31486 / LMG 2827 / NBRC 12203 / NCIMB 8253 / ATH 2.4.1.) (Rhodobacter sphaeroides).